Consider the following 222-residue polypeptide: MAEKGVKVLGMWASPMVIRVEWALRLKGVEYEYVDEDLANKSADLLRHNPVTKKVPVLVHDGKPVAESTIIVEYIDEVWKGGYPIMPGDPYERAQARFWARFAEDKCNAALYPIFTATGEAQRKAVHEAQQCLKTLETALEGKKFFGGDAVGYLDIVVGWFAHWLPVIEEVTGASVVTHEELPLMKAWFGRFLALDVVKAALPDRDRLLAANKARREQLLSA.

In terms of domain architecture, GST N-terminal spans 4-83; it reads KGVKVLGMWA…YIDEVWKGGY (80 aa). Residues Ser-14, Lys-41, Val-55, and 67–68 each bind glutathione; that span reads ES. The GST C-terminal domain occupies 89–220; that stretch reads DPYERAQARF…ANKARREQLL (132 aa).

Belongs to the GST superfamily.

It catalyses the reaction RX + glutathione = an S-substituted glutathione + a halide anion + H(+). Functionally, involved in multiple disease resistance (MDR). This Zea mays (Maize) protein is Glutathione transferase GST 23.